A 187-amino-acid polypeptide reads, in one-letter code: Elongation factor P (187 aa).

Belongs to the elongation factor P family.

It is found in the cytoplasm. It participates in protein biosynthesis; polypeptide chain elongation. Its function is as follows. Involved in peptide bond synthesis. Stimulates efficient translation and peptide-bond synthesis on native or reconstituted 70S ribosomes in vitro. Probably functions indirectly by altering the affinity of the ribosome for aminoacyl-tRNA, thus increasing their reactivity as acceptors for peptidyl transferase. This is Elongation factor P from Mycoplasmopsis pulmonis (strain UAB CTIP) (Mycoplasma pulmonis).